We begin with the raw amino-acid sequence, 244 residues long: UPF0280 protein MJ1526 (244 aa).

This sequence belongs to the UPF0280 family.

The polypeptide is UPF0280 protein MJ1526 (Methanocaldococcus jannaschii (strain ATCC 43067 / DSM 2661 / JAL-1 / JCM 10045 / NBRC 100440) (Methanococcus jannaschii)).